The chain runs to 108 residues: Replication restart protein PriB (108 aa).

In terms of domain architecture, SSB spans 8 to 108 (VDNRFSLIGK…LHAEQIEFIE (101 aa)).

This sequence belongs to the PriB family. In terms of assembly, homodimer. Interacts with PriA and DnaT. Component of the replication restart primosome. Primosome assembly occurs via a 'hand-off' mechanism. PriA binds to replication forks, subsequently PriB then DnaT bind; DnaT then displaces ssDNA to generate the helicase loading substrate.

Its function is as follows. Involved in the restart of stalled replication forks, which reloads the replicative helicase on sites other than the origin of replication; the PriA-PriB pathway is the major replication restart pathway. During primosome assembly it facilitates complex formation between PriA and DnaT on DNA; stabilizes PriA on DNA. Stimulates the DNA unwinding activity of PriA helicase. The protein is Replication restart protein PriB of Histophilus somni (strain 129Pt) (Haemophilus somnus).